A 185-amino-acid polypeptide reads, in one-letter code: Threonylcarbamoyl-AMP synthase (185 aa).

Residues 5–185 (ADRIADAVAA…DLQSGETLRR (181 aa)) form the YrdC-like domain.

It belongs to the SUA5 family. TsaC subfamily.

It localises to the cytoplasm. The enzyme catalyses L-threonine + hydrogencarbonate + ATP = L-threonylcarbamoyladenylate + diphosphate + H2O. In terms of biological role, required for the formation of a threonylcarbamoyl group on adenosine at position 37 (t(6)A37) in tRNAs that read codons beginning with adenine. Catalyzes the conversion of L-threonine, HCO(3)(-)/CO(2) and ATP to give threonylcarbamoyl-AMP (TC-AMP) as the acyladenylate intermediate, with the release of diphosphate. This is Threonylcarbamoyl-AMP synthase from Chromohalobacter salexigens (strain ATCC BAA-138 / DSM 3043 / CIP 106854 / NCIMB 13768 / 1H11).